The following is a 435-amino-acid chain: 5-methylthioadenosine/S-adenosylhomocysteine deaminase (435 aa).

Zn(2+) contacts are provided by His65 and His67. 3 residues coordinate substrate: Glu94, Arg150, and His189. A Zn(2+)-binding site is contributed by His216. 2 residues coordinate substrate: Glu219 and Asp304. Zn(2+) is bound at residue Asp304.

Belongs to the metallo-dependent hydrolases superfamily. MTA/SAH deaminase family. Zn(2+) serves as cofactor.

It carries out the reaction S-adenosyl-L-homocysteine + H2O + H(+) = S-inosyl-L-homocysteine + NH4(+). The catalysed reaction is S-methyl-5'-thioadenosine + H2O + H(+) = S-methyl-5'-thioinosine + NH4(+). Functionally, catalyzes the deamination of 5-methylthioadenosine and S-adenosyl-L-homocysteine into 5-methylthioinosine and S-inosyl-L-homocysteine, respectively. Is also able to deaminate adenosine. The polypeptide is 5-methylthioadenosine/S-adenosylhomocysteine deaminase (Bacillus cereus (strain ATCC 14579 / DSM 31 / CCUG 7414 / JCM 2152 / NBRC 15305 / NCIMB 9373 / NCTC 2599 / NRRL B-3711)).